The primary structure comprises 679 residues: Recombination repair protein 1 (679 aa).

Positions 1 to 407 (MPRVKAVKKQ…TKKAKKAETK (407 aa)) are disordered. Residues 45–55 (AKGKPRARKAT) are compositionally biased toward basic residues. A compositionally biased stretch (basic and acidic residues) spans 106 to 116 (ATAEAEPEPKV). Phosphothreonine is present on residues T133 and T140. Phosphoserine is present on S142. Composition is skewed to basic and acidic residues over residues 179 to 189 (EPPKQRARKEA) and 203 to 214 (SKEKVQKAETAA). A Phosphoserine modification is found at S258. The segment covering 312–347 (KKEGKEPAPGKKQKKSADKENGVVEEEAKPSTETKP) has biased composition (basic and acidic residues). An AP endonuclease region spans residues 428-679 (KICSWNVAGL…HCPITIFFNI (252 aa)). E461 is a binding site for Mg(2+). The active site involves Y533. Residues D572, N574, and D669 each coordinate Mg(2+). D572 serves as the catalytic Proton donor/acceptor.

Belongs to the DNA repair enzymes AP/ExoA family. As to quaternary structure, interacts with the zeta DNA polymerase complex; interacts (via the N-terminus) with the accessory subunit PolZ2/Rev7 and also interacts with the catalytic component PolZ1, however the interaction with PolZ1 is likely via PolZ2. Requires Mg(2+) as cofactor. It depends on Mn(2+) as a cofactor.

It localises to the nucleus. The enzyme catalyses Exonucleolytic cleavage in the 3'- to 5'-direction to yield nucleoside 5'-phosphates.. Its function is as follows. Plays a role in the cellular response to oxidative stress by promoting DNA repair mechanisms such as base excision repair and possibly homologous recombination repair. Functions as an apurinic/apyrimidinic (AP) endodeoxyribonuclease in the DNA base excision repair (BER) pathway of DNA lesions induced by oxidative and alkylating agents. Likely to initiate repair of AP sites in DNA by catalyzing hydrolytic incision of the phosphodiester backbone immediately adjacent to the damage, generating a single-strand break with 5'-deoxyribose phosphate and 3'-hydroxyl ends. Has a 3'-5' exoribonuclease activity on mismatched deoxyribonucleotides at the 3' termini of nicked or gapped DNA molecules during short-patch BER. Has apurinic endonuclease and double-stranded DNA 3'-exonuclease activities and carries out single-stranded DNA renaturation in a Mg(2+)-dependent manner. Activity is more efficient in purine-rich regions of dsDNA than in pyrimidine-rich regions. This chain is Recombination repair protein 1, found in Drosophila melanogaster (Fruit fly).